Reading from the N-terminus, the 290-residue chain is Syntaxin (290 aa).

The segment at 1-22 (MTKDRLAALKAAQSDDDDNDDV) is disordered. At 1–267 (MTKDRLAALK…KYQSKARRKK (267 aa)) the chain is on the cytoplasmic side. Residues 32–114 (MEEFFEQVDE…EEHTNKSSAD (83 aa)) are a coiled coil. Residues 194–256 (LADIEARHND…ETAKMDTKKA (63 aa)) form the t-SNARE coiled-coil homology domain. A helical; Anchor for type IV membrane protein transmembrane segment spans residues 268 to 288 (IMILVCLAILIIILVGVIGGT). Residues 289-290 (LG) are Extracellular-facing.

This sequence belongs to the syntaxin family.

It localises to the membrane. Its function is as follows. Potentially involved in docking of synaptic vesicles at presynaptic active zones. This Aplysia californica (California sea hare) protein is Syntaxin.